The primary structure comprises 104 residues: MKSLLLLAFFLSFFFGSLLARHLPTSSHPSHHHVGMTGALKRQRRRPDTVQVAGSRLPDCSHACGSCSPCRLVMVSFVCASVEEAETCPMAYKCMCNNKSYPVP.

An N-terminal signal peptide occupies residues 1 to 20 (MKSLLLLAFFLSFFFGSLLA). Cystine bridges form between Cys-60-Cys-94, Cys-64-Cys-70, Cys-67-Cys-96, and Cys-79-Cys-88. An N-linked (GlcNAc...) asparagine glycan is attached at Asn-98.

This sequence belongs to the plant cysteine rich small secretory peptide family. Epidermal patterning factor subfamily. In terms of assembly, interacts with ERECTA and ERL1, but not with TMM. In terms of tissue distribution, expressed in shoots, but not in roots. Mostly localized in developing leaves, specifically in meristemoids, guard mother cells (GMCs), and young guard cells.

The protein localises to the secreted. Its function is as follows. Controls stomatal patterning. Regulates asymmetric cell division during guard cell differentiation. Mediates stomatal development inhibition. Not cleaved by the protease CRSP (AC Q9LNU1). MEPF1: mobile signal controlling stomatal development in a non-cell-autonomous manner. Uses ERL1 as major receptor. May act by competing with somatogen (AC Q9SV72) for the same receptor, TMM (AC Q9SSD1). This Arabidopsis thaliana (Mouse-ear cress) protein is Protein EPIDERMAL PATTERNING FACTOR 1.